We begin with the raw amino-acid sequence, 363 residues long: Chorismate synthase (363 aa).

The interval 44–63 (DLDRRKPGTSRHTTQRQEPD) is disordered. Residues R48 and R54 each contribute to the NADP(+) site. Residues 125–127 (RSS), 237–238 (NA), G277, 292–296 (KPTSS), and R318 each bind FMN.

It belongs to the chorismate synthase family. In terms of assembly, homotetramer. FMNH2 serves as cofactor.

The catalysed reaction is 5-O-(1-carboxyvinyl)-3-phosphoshikimate = chorismate + phosphate. It functions in the pathway metabolic intermediate biosynthesis; chorismate biosynthesis; chorismate from D-erythrose 4-phosphate and phosphoenolpyruvate: step 7/7. In terms of biological role, catalyzes the anti-1,4-elimination of the C-3 phosphate and the C-6 proR hydrogen from 5-enolpyruvylshikimate-3-phosphate (EPSP) to yield chorismate, which is the branch point compound that serves as the starting substrate for the three terminal pathways of aromatic amino acid biosynthesis. This reaction introduces a second double bond into the aromatic ring system. This is Chorismate synthase from Pseudomonas fluorescens (strain ATCC BAA-477 / NRRL B-23932 / Pf-5).